Here is a 463-residue protein sequence, read N- to C-terminus: Chromosomal replication initiator protein DnaA (463 aa).

The tract at residues M1 to T90 is domain I, interacts with DnaA modulators. The domain II stretch occupies residues V91–S126. The tract at residues N127–A343 is domain III, AAA+ region. ATP-binding residues include G171, G173, K174, and T175. The tract at residues N344–S463 is domain IV, binds dsDNA.

The protein belongs to the DnaA family. As to quaternary structure, oligomerizes as a right-handed, spiral filament on DNA at oriC.

It localises to the cytoplasm. In terms of biological role, plays an essential role in the initiation and regulation of chromosomal replication. ATP-DnaA binds to the origin of replication (oriC) to initiate formation of the DNA replication initiation complex once per cell cycle. Binds the DnaA box (a 9 base pair repeat at the origin) and separates the double-stranded (ds)DNA. Forms a right-handed helical filament on oriC DNA; dsDNA binds to the exterior of the filament while single-stranded (ss)DNA is stabiized in the filament's interior. The ATP-DnaA-oriC complex binds and stabilizes one strand of the AT-rich DNA unwinding element (DUE), permitting loading of DNA polymerase. After initiation quickly degrades to an ADP-DnaA complex that is not apt for DNA replication. Binds acidic phospholipids. The chain is Chromosomal replication initiator protein DnaA from Serratia proteamaculans (strain 568).